The sequence spans 240 residues: Alkaline phosphatase synthesis transcriptional regulatory protein PhoP (240 aa).

Residues 4-118 enclose the Response regulatory domain; sequence KILVVDDEES…EVNARVKAIL (115 aa). Residue Asp-53 is modified to 4-aspartylphosphate. The segment at residues 136–235 is a DNA-binding region (ompR/PhoB-type); that stretch reads EGQIVIGDLK…IRGLGYKLEE (100 aa).

Phosphorylated by PhoR.

The protein resides in the cytoplasm. Functionally, member of the two-component regulatory system PhoP/PhoR involved in the regulation of alkaline phosphatase genes phoA and phoB and of phosphodiesterase. This Bacillus subtilis (strain 168) protein is Alkaline phosphatase synthesis transcriptional regulatory protein PhoP (phoP).